Reading from the N-terminus, the 317-residue chain is MTSSTKSSFVLGHRHLLGIEGLSVADITGLLDLSEEYVELNRQVDKKRTSLRGRTQINLFFEASTRTQSSFEIAGKRLGADVMNMSVSSMSTRKGETLVDTAMTLNAMHPDILVMRHSASGAVELLARKVDGSVINAGDGAHEHPTQALLDALTIRRNKGRLDGLLVAICGDVLHSRVARSNIILLNAMGARVRVVAPSTLLPPGIERMGVEVARDMREGLDGADIVMMLRLQRERMSGSFVPSVSEYFHYFGLDQKKLAYAKPDALVMHPGPMNRGVEIDSIVADGAQSLIREQVEMGVAVRMAVLEALARNLPNA.

Residues Arg66 and Thr67 each contribute to the carbamoyl phosphate site. Residue Lys94 coordinates L-aspartate. Residues Arg116, His144, and Gln147 each contribute to the carbamoyl phosphate site. L-aspartate is bound by residues Arg177 and Arg231. Gly272 and Pro273 together coordinate carbamoyl phosphate.

The protein belongs to the aspartate/ornithine carbamoyltransferase superfamily. ATCase family. Heterododecamer (2C3:3R2) of six catalytic PyrB chains organized as two trimers (C3), and six regulatory PyrI chains organized as three dimers (R2).

The catalysed reaction is carbamoyl phosphate + L-aspartate = N-carbamoyl-L-aspartate + phosphate + H(+). It participates in pyrimidine metabolism; UMP biosynthesis via de novo pathway; (S)-dihydroorotate from bicarbonate: step 2/3. Functionally, catalyzes the condensation of carbamoyl phosphate and aspartate to form carbamoyl aspartate and inorganic phosphate, the committed step in the de novo pyrimidine nucleotide biosynthesis pathway. This is Aspartate carbamoyltransferase catalytic subunit from Nitrobacter hamburgensis (strain DSM 10229 / NCIMB 13809 / X14).